The sequence spans 252 residues: MQLTRCCFVFLVQGSLYLVICGQDDGPPGSEDPERDDHEGQPRPRVPRKRGHISPKSRPMANSTLLGLLAPPGEAWGILGQPPNRPNHSPPPSAKVKKIFGWGDFYSNIKTVALNLLVTGKIVDHGNGTFSVHFQHNATGQGNISISLVPPSKAVEFHQEQQIFIEAKASKIFNCRMEWEKVERGRRTSLCTHDPAKICSRDHAQSSATWSCSQPFKVVCVYIAFYSTDYRLVQKVCPDYNYHSDTPYYPSG.

The signal sequence occupies residues M1 to G22. Residues Q23–A75 form an II region. Residues P27–R58 form a disordered region. Over residues R45–P55 the composition is skewed to basic residues. N-linked (GlcNAc...) asparagine glycans are attached at residues N62, N127, N137, and N143. Positions W76 to F157 are III. Residues H158–E166 are IV (linker domain). The v (Cys-rich) stretch occupies residues A167–G252.

The protein belongs to the neurexophilin family. May be proteolytically processed at the boundary between the N-terminal non-conserved and the central conserved domain in neuron-like cells. As to expression, highest level in brain.

It localises to the secreted. May be signaling molecules that resemble neuropeptides. Ligand for alpha-neurexins. The sequence is that of Neurexophilin-3 (NXPH3) from Homo sapiens (Human).